The chain runs to 137 residues: Large ribosomal subunit protein uL16 (137 aa).

Belongs to the universal ribosomal protein uL16 family. As to quaternary structure, part of the 50S ribosomal subunit.

Its function is as follows. Binds 23S rRNA and is also seen to make contacts with the A and possibly P site tRNAs. The polypeptide is Large ribosomal subunit protein uL16 (Xanthomonas campestris pv. campestris (strain 8004)).